Reading from the N-terminus, the 117-residue chain is Ribonuclease P protein component 4 (117 aa).

Cys-64, Cys-67, Cys-93, and Cys-96 together coordinate Zn(2+).

This sequence belongs to the eukaryotic/archaeal RNase P protein component 4 family. As to quaternary structure, consists of a catalytic RNA component and at least 4-5 protein subunits. Zn(2+) serves as cofactor.

The protein localises to the cytoplasm. It carries out the reaction Endonucleolytic cleavage of RNA, removing 5'-extranucleotides from tRNA precursor.. In terms of biological role, part of ribonuclease P, a protein complex that generates mature tRNA molecules by cleaving their 5'-ends. This chain is Ribonuclease P protein component 4, found in Pyrococcus abyssi (strain GE5 / Orsay).